We begin with the raw amino-acid sequence, 183 residues long: Ribosome maturation factor RimM (183 aa).

In terms of domain architecture, PRC barrel spans 104-183; it reads EGDYYWKDLI…TIEVDWDPGF (80 aa).

The protein belongs to the RimM family. As to quaternary structure, binds ribosomal protein uS19.

Its subcellular location is the cytoplasm. In terms of biological role, an accessory protein needed during the final step in the assembly of 30S ribosomal subunit, possibly for assembly of the head region. Essential for efficient processing of 16S rRNA. May be needed both before and after RbfA during the maturation of 16S rRNA. It has affinity for free ribosomal 30S subunits but not for 70S ribosomes. The sequence is that of Ribosome maturation factor RimM from Cronobacter sakazakii (strain ATCC BAA-894) (Enterobacter sakazakii).